The following is a 67-amino-acid chain: Large ribosomal subunit protein bL32c (67 aa).

It belongs to the bacterial ribosomal protein bL32 family.

The protein localises to the plastid. The protein resides in the chloroplast. The protein is Large ribosomal subunit protein bL32c of Chara vulgaris (Common stonewort).